Here is a 259-residue protein sequence, read N- to C-terminus: Uridylate kinase (259 aa).

21 to 24 (KLSG) is a binding site for ATP. Position 63 (Gly-63) interacts with UMP. Positions 64 and 68 each coordinate ATP. Residues Asp-83 and 144–151 (TGNPYFTT) contribute to the UMP site. Positions 171, 177, and 180 each coordinate ATP.

The protein belongs to the UMP kinase family. As to quaternary structure, homohexamer.

The protein localises to the cytoplasm. The catalysed reaction is UMP + ATP = UDP + ADP. It participates in pyrimidine metabolism; CTP biosynthesis via de novo pathway; UDP from UMP (UMPK route): step 1/1. Its activity is regulated as follows. Inhibited by UTP. Its function is as follows. Catalyzes the reversible phosphorylation of UMP to UDP. The chain is Uridylate kinase from Salinibacter ruber (strain DSM 13855 / M31).